The primary structure comprises 603 residues: Insulin-like growth factor-binding protein complex acid labile subunit (603 aa).

An N-terminal signal peptide occupies residues 1–23 (MALRTGGPALVVLLAFWVALGPC). The LRRNT domain maps to 32–74 (ASADAEGPQCPVACTCSHDDYTDELSVFCSSKNLTHLPDDIPV). 2 disulfide bridges follow: Cys41/Cys47 and Cys45/Cys60. Asn64, Asn85, and Asn96 each carry an N-linked (GlcNAc...) asparagine glycan. LRR repeat units follow at residues 75 to 96 (STRA…AFQN), 99 to 120 (SLDF…ALLG), 123 to 144 (NLYY…LFTH), 147 to 168 (SLAS…LFQG), 171 to 192 (HLWD…VFQG), 195 to 216 (NLHE…LFCG), 219 to 240 (ELRE…VFVH), 243 to 264 (RLQK…AFLG), 267 to 288 (ALRW…TFPG), 291 to 312 (GLHV…TFKD), 315 to 336 (FLEE…TFEG), 339 to 360 (QLEV…AFSG), 363 to 384 (NVAV…VFQG), 387 to 408 (KLHS…TFAG), 411 to 432 (GLRR…SLAG), 435 to 456 (ELLE…LFQG), 459 to 480 (HLEY…VLGP), 483 to 504 (RAFW…LFSS), and 507 to 528 (RVRY…PGLE). Residue Asn368 is glycosylated (N-linked (GlcNAc...) asparagine). The N-linked (GlcNAc...) asparagine glycan is linked to Asn515. The 69-residue stretch at 535–603 (NPWDCSCPLK…DVSETHFVHC (69 aa)) folds into the LRRCT domain. Disulfide bonds link Cys539-Cys581, Cys541-Cys603, and Cys565-Cys570. Residues Asn578 and Asn586 are each glycosylated (N-linked (GlcNAc...) asparagine).

In terms of assembly, forms a ternary complex with IGF1 and IGFBP3. Brain, kidney, lung, heart, spleen, muscle and liver.

Its subcellular location is the secreted. The protein localises to the extracellular space. Its function is as follows. May have an important role in regulating the access of circulating IGFs to the tissues. The sequence is that of Insulin-like growth factor-binding protein complex acid labile subunit (Igfals) from Rattus norvegicus (Rat).